Here is a 209-residue protein sequence, read N- to C-terminus: Na(+)-translocating NADH-quinone reductase subunit D (209 aa).

Transmembrane regions (helical) follow at residues 42–62 (LVMTIAVTLVTAFSSFFISLI), 72–92 (IIVQMAIIASLVIVVDQILQA), 103–123 (VFVGLIITNCIVMGRAEAYAM), 131–151 (FMDGIGNGLGYGVILVLVGFL), and 178–198 (NGLFLLAPSAFFIIGMLIWGL).

This sequence belongs to the NqrDE/RnfAE family. As to quaternary structure, composed of six subunits; NqrA, NqrB, NqrC, NqrD, NqrE and NqrF.

It localises to the cell inner membrane. The enzyme catalyses a ubiquinone + n Na(+)(in) + NADH + H(+) = a ubiquinol + n Na(+)(out) + NAD(+). Its function is as follows. NQR complex catalyzes the reduction of ubiquinone-1 to ubiquinol by two successive reactions, coupled with the transport of Na(+) ions from the cytoplasm to the periplasm. NqrA to NqrE are probably involved in the second step, the conversion of ubisemiquinone to ubiquinol. The sequence is that of Na(+)-translocating NADH-quinone reductase subunit D from Photorhabdus laumondii subsp. laumondii (strain DSM 15139 / CIP 105565 / TT01) (Photorhabdus luminescens subsp. laumondii).